A 222-amino-acid polypeptide reads, in one-letter code: Probable transaldolase (222 aa).

The active-site Schiff-base intermediate with substrate is Lys91.

This sequence belongs to the transaldolase family. Type 3B subfamily.

The protein resides in the cytoplasm. It carries out the reaction D-sedoheptulose 7-phosphate + D-glyceraldehyde 3-phosphate = D-erythrose 4-phosphate + beta-D-fructose 6-phosphate. The protein operates within carbohydrate degradation; pentose phosphate pathway; D-glyceraldehyde 3-phosphate and beta-D-fructose 6-phosphate from D-ribose 5-phosphate and D-xylulose 5-phosphate (non-oxidative stage): step 2/3. Functionally, transaldolase is important for the balance of metabolites in the pentose-phosphate pathway. This Chlorobaculum parvum (strain DSM 263 / NCIMB 8327) (Chlorobium vibrioforme subsp. thiosulfatophilum) protein is Probable transaldolase.